The following is a 179-amino-acid chain: MLNMKEQYTKEVVPALQKEFGYKNVMQVPRIEKITLNMGVGEAVGDKKLIENAVADLERLAGQKVVVTKARKSVAGFKIREGWPIGCKVTLRGERMWDFFDRLVHIAVPRIRDFRGLNPKSFDGRGNYSMGVREQIIFPEIEYDKVDKIRGLDITITTTAGTDDEGRELLKAFGFPFKK.

The protein belongs to the universal ribosomal protein uL5 family. In terms of assembly, part of the 50S ribosomal subunit; part of the 5S rRNA/L5/L18/L25 subcomplex. Contacts the 5S rRNA and the P site tRNA. Forms a bridge to the 30S subunit in the 70S ribosome.

Its function is as follows. This is one of the proteins that bind and probably mediate the attachment of the 5S RNA into the large ribosomal subunit, where it forms part of the central protuberance. In the 70S ribosome it contacts protein S13 of the 30S subunit (bridge B1b), connecting the 2 subunits; this bridge is implicated in subunit movement. Contacts the P site tRNA; the 5S rRNA and some of its associated proteins might help stabilize positioning of ribosome-bound tRNAs. This Marinobacter nauticus (strain ATCC 700491 / DSM 11845 / VT8) (Marinobacter aquaeolei) protein is Large ribosomal subunit protein uL5.